Reading from the N-terminus, the 113-residue chain is Protein S100-A9 (113 aa).

Ala-2 is modified (N-acetylalanine). 2 consecutive EF-hand domains span residues 13–48 (ITTI…QLAT) and 55–90 (RNEA…LIFA). Residue His-21 participates in Zn(2+) binding. Ser-24 and His-29 together coordinate Ca(2+). Asp-31 is a Zn(2+) binding site. Ca(2+)-binding residues include Thr-32, Glu-37, Asp-68, Asn-70, Asp-72, Gln-74, and Glu-79. Zn(2+) is bound by residues His-92 and His-96. Residue His-107 is modified to Pros-methylhistidine.

This sequence belongs to the S-100 family. In terms of assembly, homodimer. Preferentially exists as a heterodimer or heterotetramer with S100A8 known as calprotectin (S100A8/A9). S100A9 interacts with ATP2A2. S100A9 interacts with AGER, and with the heterodimeric complex formed by TLR4 and LY96 in the presence of calcium and/or zinc ions. S100A9 binds quinoline-3-carboxamides in the presence of calcium and/or zinc ions. S100A9 interacts with amyloid-beta protein 40. Calprotectin (S100A8/9) interacts with CEACAM3 and tubulin filaments in a calcium-dependent manner. Heterotetrameric calprotectin (S100A8/A9) interacts with ANXA6 and associates with tubulin filaments in activated monocytes. Calprotectin (S100A8/9) interacts with NCF2/P67PHOX, RAC1, RAC2, CYBA and CYBB. Calprotectin (S100A8/9) interacts with NOS2 to form the iNOS-S100A8/A9 transnitrosylase complex; induced by LDL(ox). Calprotectin (S100A8/9) interacts with CD69. In terms of processing, phosphorylated. Phosphorylation inhibits activation of tubulin polymerization. Methylation at His-107 by METTL9 reduces zinc-binding without affecting heterodimerization with S100A8.

Its subcellular location is the secreted. The protein resides in the cytoplasm. The protein localises to the cytoskeleton. It is found in the cell membrane. Its function is as follows. S100A9 is a calcium- and zinc-binding protein which plays a prominent role in the regulation of inflammatory processes and immune response. It can induce neutrophil chemotaxis, adhesion, can increase the bactericidal activity of neutrophils by promoting phagocytosis via activation of SYK, PI3K/AKT, and ERK1/2 and can induce degranulation of neutrophils by a MAPK-dependent mechanism. Predominantly found as calprotectin (S100A8/A9) which has a wide plethora of intra- and extracellular functions. The intracellular functions include: facilitating leukocyte arachidonic acid trafficking and metabolism, modulation of the tubulin-dependent cytoskeleton during migration of phagocytes and activation of the neutrophilic NADPH-oxidase. Also participates in regulatory T-cell differentiation together with CD69. Activates NADPH-oxidase by facilitating the enzyme complex assembly at the cell membrane, transferring arachidonic acid, an essential cofactor, to the enzyme complex and S100A8 contributes to the enzyme assembly by directly binding to NCF2/P67PHOX. The extracellular functions involve pro-inflammatory, antimicrobial, oxidant-scavenging and apoptosis-inducing activities. Its pro-inflammatory activity includes recruitment of leukocytes, promotion of cytokine and chemokine production, and regulation of leukocyte adhesion and migration. Acts as an alarmin or a danger associated molecular pattern (DAMP) molecule and stimulates innate immune cells via binding to pattern recognition receptors such as Toll-like receptor 4 (TLR4) and receptor for advanced glycation endproducts (AGER). Binding to TLR4 and AGER activates the MAP-kinase and NF-kappa-B signaling pathways resulting in the amplification of the pro-inflammatory cascade. Has antimicrobial activity towards bacteria and fungi and exerts its antimicrobial activity probably via chelation of Zn(2+) which is essential for microbial growth. Can induce cell death via autophagy and apoptosis and this occurs through the cross-talk of mitochondria and lysosomes via reactive oxygen species (ROS) and the process involves BNIP3. Can regulate neutrophil number and apoptosis by an anti-apoptotic effect; regulates cell survival via ITGAM/ITGB and TLR4 and a signaling mechanism involving MEK-ERK. Its role as an oxidant scavenger has a protective role in preventing exaggerated tissue damage by scavenging oxidants. The iNOS-S100A8/A9 transnitrosylase complex is proposed to direct selective inflammatory stimulus-dependent S-nitrosylation of multiple targets such as GAPDH, NXA5, EZR, MSN and VIM by recognizing a [IL]-x-C-x-x-[DE] motif. In Mus musculus (Mouse), this protein is Protein S100-A9 (S100a9).